The sequence spans 322 residues: MANIINLWNGIVPTVQDVNVASITAFKSMIDETWDKKIEANTCISRKHRNIIHEVIRDFMKAYPKMDENRKSPLGAPMQWLTQYYILKNEYHKTMLAYDNGSLNTKFKTLNIYMITNVGQYILYIVFCIISGKNHDGTPYIYDSEITSNDKNLINERIKYACKQILHGQLTIALRIRNKFMFIGSPMYLWFNVNGSQRRMKAEREIARKNCGGNPCERELKSERSNVKRLEYQLDAEKEKVKFYKRELERDRYLSSRYLTSSSDPHEKPLPNYTFPRIKNVSPLTTEATGSVEVAPPSTDVTEPISDVTPSVDVEPEHPPAF.

Positions 284 to 322 (LTTEATGSVEVAPPSTDVTEPISDVTPSVDVEPEHPPAF) are disordered.

It belongs to the chordopoxvirinae A26 protein family.

Its function is as follows. Encodes a truncated version of poxvirus A26 protein. This is Putative A-type inclusion protein from Vaccinia virus (strain Copenhagen) (VACV).